Reading from the N-terminus, the 261-residue chain is MICOS complex subunit Mic25 (261 aa).

Gly-2 is lipidated: N-myristoyl glycine. Residues Ser-13, Ser-31, and Ser-33 each carry the phosphoserine modification. Disordered stretches follow at residues 39-59, 81-114, and 140-165; these read KDCSQPSAGEQLAPGPGPECS, CGPAEGTYKAPQGDFKVSRAENSDGQQSSAVKED, and TEKHLKASLPKKKATHEQQQSDRLTR. Positions 109–202 form a coiled coil; sequence SAVKEDLKKF…AELYKLSSQQ (94 aa). The segment covering 154 to 165 has biased composition (basic and acidic residues); that stretch reads THEQQQSDRLTR. One can recognise a CHCH domain in the interval 220–261; the sequence is EPVCSGLQAQILRCYRDHLHEVLLCSDLAKAYQHCVSTARKG. 2 short sequence motifs (cx9C motif) span residues 223–233 and 244–254; these read CSGLQAQILRC and CSDLAKAYQHC. 2 disulfides stabilise this stretch: Cys-223–Cys-254 and Cys-233–Cys-244.

This sequence belongs to the MICOS complex subunit Mic19 family. Metazoan Mic25 subfamily. Component of the mitochondrial contact site and cristae organizing system (MICOS) complex, composed of at least MICOS10/MIC10, CHCHD3/MIC19, CHCHD6/MIC25, APOOL/MIC27, IMMT/MIC60, APOO/MIC23/MIC26 and MICOS13/MIC13. This complex was also known under the names MINOS or MitOS complex. The MICOS complex associates with mitochondrial outer membrane proteins SAMM50, MTX1 and MTX2 (together described as components of the mitochondrial outer membrane sorting assembly machinery (SAM) complex) and DNAJC11, mitochondrial inner membrane protein TMEM11 and with HSPA9. The MICOS and SAM complexes together with DNAJC11 are part of a large protein complex spanning both membranes termed the mitochondrial intermembrane space bridging (MIB) complex. Interacts with DISC1. Interacts with IMMT/MIC60.

The protein localises to the mitochondrion inner membrane. The protein resides in the mitochondrion. Its function is as follows. Component of the MICOS complex, a large protein complex of the mitochondrial inner membrane that plays crucial roles in the maintenance of crista junctions, inner membrane architecture, and formation of contact sites to the outer membrane. The polypeptide is MICOS complex subunit Mic25 (Chchd6) (Rattus norvegicus (Rat)).